We begin with the raw amino-acid sequence, 289 residues long: Ribosomal RNA small subunit methyltransferase A (289 aa).

S-adenosyl-L-methionine contacts are provided by N21, L23, G48, E69, D94, and N120.

It belongs to the class I-like SAM-binding methyltransferase superfamily. rRNA adenine N(6)-methyltransferase family. RsmA subfamily.

Its subcellular location is the cytoplasm. It carries out the reaction adenosine(1518)/adenosine(1519) in 16S rRNA + 4 S-adenosyl-L-methionine = N(6)-dimethyladenosine(1518)/N(6)-dimethyladenosine(1519) in 16S rRNA + 4 S-adenosyl-L-homocysteine + 4 H(+). Specifically dimethylates two adjacent adenosines (A1518 and A1519) in the loop of a conserved hairpin near the 3'-end of 16S rRNA in the 30S particle. May play a critical role in biogenesis of 30S subunits. This Actinobacillus pleuropneumoniae serotype 7 (strain AP76) protein is Ribosomal RNA small subunit methyltransferase A.